Consider the following 134-residue polypeptide: ATP synthase epsilon chain, chloroplastic (134 aa).

This sequence belongs to the ATPase epsilon chain family. As to quaternary structure, F-type ATPases have 2 components, CF(1) - the catalytic core - and CF(0) - the membrane proton channel. CF(1) has five subunits: alpha(3), beta(3), gamma(1), delta(1), epsilon(1). CF(0) has three main subunits: a, b and c.

The protein localises to the plastid. It is found in the chloroplast thylakoid membrane. Produces ATP from ADP in the presence of a proton gradient across the membrane. The protein is ATP synthase epsilon chain, chloroplastic of Drimys granadensis.